Here is a 229-residue protein sequence, read N- to C-terminus: Aldehyde oxidoreductase iron-sulfur-binding subunit PaoA (229 aa).

The tract at residues 1 to 21 is disordered; sequence MSNQGEYPEDNRVGKHEPHDL. A signal peptide (tat-type signal) is located at residues 1 to 53; it reads MSNQGEYPEDNRVGKHEPHDLSLTRRDLIKVSAATAATAVVYPHSTLAASVPA. The segment covering 9 to 21 has biased composition (basic and acidic residues); the sequence is EDNRVGKHEPHDL. The 2Fe-2S ferredoxin-type domain maps to 61-137; that stretch reads MPLTLKVNGK…GAEITTIEGL (77 aa). Positions 99, 104, 105, 107, 119, 158, 161, 208, and 210 each coordinate [2Fe-2S] cluster.

In terms of assembly, heterotrimer composed of PaoA, PaoB and PaoC. [2Fe-2S] cluster serves as cofactor. Post-translationally, exported by the Tat system. The position of the signal peptide cleavage has not been experimentally proven.

The protein localises to the periplasm. It carries out the reaction an aldehyde + A + H2O = a carboxylate + AH2 + H(+). Its activity is regulated as follows. The complex requires PaoD for activity. In terms of biological role, oxidizes aldehydes to the corresponding carboxylic acids with a preference for aromatic aldehydes. It might play a role in the detoxification of aldehydes to avoid cell damage. The chain is Aldehyde oxidoreductase iron-sulfur-binding subunit PaoA from Escherichia coli (strain K12).